The sequence spans 189 residues: Class A basic helix-loop-helix protein 15 (189 aa).

Residues 1–12 (MKTKNRPPRRRA) show a composition bias toward basic residues. Disordered stretches follow at residues 1–85 (MKTK…ERER) and 167–189 (TEAQPQGHLQRYSTQIHSFREGT). Phosphothreonine is present on Thr-25. The segment covering 68 to 85 (GRRDSSIQRRLESNERER) has biased composition (basic and acidic residues). The 53-residue stretch at 75-127 (QRRLESNERERQRMHKLNNAFQALREVIPHVRADKKLSKIETLTLAKNYIKSL) folds into the bHLH domain.

In terms of assembly, forms homodimers or heterodimers with TCF3 gene products E12 and E47. These dimers bind to the E-box site, however, heterodimer with MYOD1 does not bind target DNA. As to expression, expressed in brain, liver, spleen and skeletal muscle.

It localises to the nucleus. Functionally, plays a role in controlling the transcriptional activity of MYOD1, ensuring that expanding myoblast populations remain undifferentiated. Repression may occur through muscle-specific E-box occupancy by homodimers. May also negatively regulate bHLH-mediated transcription through an N-terminal repressor domain. Serves as a key regulator of acinar cell function, stability, and identity. Also required for normal organelle localization in exocrine cells and for mitochondrial calcium ion transport. May function as a unique regulator of gene expression in several different embryonic and postnatal cell lineages. Binds to the E-box consensus sequence 5'-CANNTG-3'. This is Class A basic helix-loop-helix protein 15 (BHLHA15) from Homo sapiens (Human).